The chain runs to 164 residues: ATP synthase subunit b (164 aa).

A helical transmembrane segment spans residues 7–25 (SFWLAVSFIIFVYLIYRPA).

Belongs to the ATPase B chain family. In terms of assembly, F-type ATPases have 2 components, F(1) - the catalytic core - and F(0) - the membrane proton channel. F(1) has five subunits: alpha(3), beta(3), gamma(1), delta(1), epsilon(1). F(0) has three main subunits: a(1), b(2) and c(10-14). The alpha and beta chains form an alternating ring which encloses part of the gamma chain. F(1) is attached to F(0) by a central stalk formed by the gamma and epsilon chains, while a peripheral stalk is formed by the delta and b chains.

It localises to the cell inner membrane. Functionally, f(1)F(0) ATP synthase produces ATP from ADP in the presence of a proton or sodium gradient. F-type ATPases consist of two structural domains, F(1) containing the extramembraneous catalytic core and F(0) containing the membrane proton channel, linked together by a central stalk and a peripheral stalk. During catalysis, ATP synthesis in the catalytic domain of F(1) is coupled via a rotary mechanism of the central stalk subunits to proton translocation. Component of the F(0) channel, it forms part of the peripheral stalk, linking F(1) to F(0). This is ATP synthase subunit b from Rickettsia felis (strain ATCC VR-1525 / URRWXCal2) (Rickettsia azadi).